A 128-amino-acid polypeptide reads, in one-letter code: Fluoride-specific ion channel FluC (128 aa).

A run of 4 helical transmembrane segments spans residues 5–25, 35–55, 67–87, and 96–116; these read IVAIFVGAGLGALLRWFLSLA, LGTLAANLIGGYVIGIAAVVF, LFVITGFLGGLTTFSTYSVEV, and FGWAFAVAALHLTGSFALTAL. Na(+) contacts are provided by Gly-75 and Thr-78.

The protein belongs to the fluoride channel Fluc/FEX (TC 1.A.43) family.

Its subcellular location is the cell inner membrane. The enzyme catalyses fluoride(in) = fluoride(out). Its activity is regulated as follows. Na(+) is not transported, but it plays an essential structural role and its presence is essential for fluoride channel function. Its function is as follows. Fluoride-specific ion channel. Important for reducing fluoride concentration in the cell, thus reducing its toxicity. The polypeptide is Fluoride-specific ion channel FluC (Burkholderia lata (strain ATCC 17760 / DSM 23089 / LMG 22485 / NCIMB 9086 / R18194 / 383)).